We begin with the raw amino-acid sequence, 344 residues long: Anthranilate phosphoribosyltransferase (344 aa).

5-phospho-alpha-D-ribose 1-diphosphate contacts are provided by residues G83, 86–87 (GD), T91, 93–96 (NIST), 111–119 (KHGGRSVSS), and S123. Residue G83 coordinates anthranilate. S95 is a Mg(2+) binding site. R169 contributes to the anthranilate binding site. 2 residues coordinate Mg(2+): D228 and E229.

It belongs to the anthranilate phosphoribosyltransferase family. Homodimer. The cofactor is Mg(2+).

The enzyme catalyses N-(5-phospho-beta-D-ribosyl)anthranilate + diphosphate = 5-phospho-alpha-D-ribose 1-diphosphate + anthranilate. It participates in amino-acid biosynthesis; L-tryptophan biosynthesis; L-tryptophan from chorismate: step 2/5. Functionally, catalyzes the transfer of the phosphoribosyl group of 5-phosphorylribose-1-pyrophosphate (PRPP) to anthranilate to yield N-(5'-phosphoribosyl)-anthranilate (PRA). In Methylibium petroleiphilum (strain ATCC BAA-1232 / LMG 22953 / PM1), this protein is Anthranilate phosphoribosyltransferase.